Consider the following 270-residue polypeptide: Thiazole synthase (270 aa).

The active-site Schiff-base intermediate with DXP is Lys-111. Residues Gly-172, 198-199, and 220-221 contribute to the 1-deoxy-D-xylulose 5-phosphate site; these read AG and NS. Residues 249–270 form a disordered region; it reads AGRLPTRAQASPSSPTTGKVND. Residues 256-270 show a composition bias toward polar residues; the sequence is AQASPSSPTTGKVND.

This sequence belongs to the ThiG family. Homotetramer. Forms heterodimers with either ThiH or ThiS.

The protein resides in the cytoplasm. The catalysed reaction is [ThiS sulfur-carrier protein]-C-terminal-Gly-aminoethanethioate + 2-iminoacetate + 1-deoxy-D-xylulose 5-phosphate = [ThiS sulfur-carrier protein]-C-terminal Gly-Gly + 2-[(2R,5Z)-2-carboxy-4-methylthiazol-5(2H)-ylidene]ethyl phosphate + 2 H2O + H(+). It participates in cofactor biosynthesis; thiamine diphosphate biosynthesis. In terms of biological role, catalyzes the rearrangement of 1-deoxy-D-xylulose 5-phosphate (DXP) to produce the thiazole phosphate moiety of thiamine. Sulfur is provided by the thiocarboxylate moiety of the carrier protein ThiS. In vitro, sulfur can be provided by H(2)S. In Synechococcus sp. (strain WH7803), this protein is Thiazole synthase.